The sequence spans 131 residues: Large-conductance mechanosensitive channel (131 aa).

3 helical membrane passes run 14–34 (IMDL…VTSL), 38–58 (IIMP…LAVT), and 67–87 (GSFI…FIVI).

Belongs to the MscL family. In terms of assembly, homopentamer.

The protein resides in the cell membrane. Its function is as follows. Channel that opens in response to stretch forces in the membrane lipid bilayer. May participate in the regulation of osmotic pressure changes within the cell. The polypeptide is Large-conductance mechanosensitive channel (Bacillus velezensis (strain DSM 23117 / BGSC 10A6 / LMG 26770 / FZB42) (Bacillus amyloliquefaciens subsp. plantarum)).